The primary structure comprises 172 residues: Peptide methionine sulfoxide reductase MsrA (172 aa).

C12 is a catalytic residue.

Belongs to the MsrA Met sulfoxide reductase family.

It catalyses the reaction L-methionyl-[protein] + [thioredoxin]-disulfide + H2O = L-methionyl-(S)-S-oxide-[protein] + [thioredoxin]-dithiol. The catalysed reaction is [thioredoxin]-disulfide + L-methionine + H2O = L-methionine (S)-S-oxide + [thioredoxin]-dithiol. In terms of biological role, has an important function as a repair enzyme for proteins that have been inactivated by oxidation. Catalyzes the reversible oxidation-reduction of methionine sulfoxide in proteins to methionine. This Ligilactobacillus salivarius (strain UCC118) (Lactobacillus salivarius) protein is Peptide methionine sulfoxide reductase MsrA.